We begin with the raw amino-acid sequence, 568 residues long: Protein yellow (568 aa).

A signal peptide spans 1-28 (MHAQDKGGVLPGLSLLLIAVAMVCPSQA). Asn151 and Asn222 each carry an N-linked (GlcNAc...) asparagine glycan.

It belongs to the major royal jelly protein family.

Its subcellular location is the secreted. Its function is as follows. Controls the pigmentation pattern of the adult cuticle and larval mouth parts. In Drosophila guanche (Fruit fly), this protein is Protein yellow (y).